Consider the following 156-residue polypeptide: Protein-export protein SecB (156 aa).

The protein belongs to the SecB family. In terms of assembly, homotetramer, a dimer of dimers. One homotetramer interacts with 1 SecA dimer.

The protein localises to the cytoplasm. One of the proteins required for the normal export of preproteins out of the cell cytoplasm. It is a molecular chaperone that binds to a subset of precursor proteins, maintaining them in a translocation-competent state. It also specifically binds to its receptor SecA. The chain is Protein-export protein SecB from Yersinia enterocolitica serotype O:8 / biotype 1B (strain NCTC 13174 / 8081).